Consider the following 653-residue polypeptide: Epithelial sodium channel subunit gamma (653 aa).

The Cytoplasmic portion of the chain corresponds to 1 to 54; it reads MGHGRRISESIKKQLPVTGPEAPTVKNLMDWYLNNTNTHGCRRIAVSRGYLRRW. A helical membrane pass occupies residues 55–75; sequence IWICFTVSSVGMIFWQWTLLL. Topologically, residues 76-546 are extracellular; the sequence is MSYYTVSVSV…GGQLGLWMSC (471 aa). Cystine bridges form between C100–C290, C214–C221, C267–C274, C379–C464, C401–C460, C405–C456, C414–C441, and C416–C430. The helical transmembrane segment at 547-567 threads the bilayer; sequence SIVCFLEMWEVFLVDILTIIA. Over 568–653 the chain is Cytoplasmic; the sequence is RYWLHRGRQW…DEQVSDTEVN (86 aa). The interval 582–608 is disordered; that stretch reads KERQMQQPSPPDHDTGHHNPVCIDDED.

Belongs to the amiloride-sensitive sodium channel (TC 1.A.6) family. SCNN1G subfamily. As to quaternary structure, component of the heterotrimeric epithelial sodium channel (ENaC) composed of an alpha/SCNN1A, a beta/SCNN1B and a gamma/SCNN1G subunit. In terms of tissue distribution, strongly expressed in gill, liver, kidney and rectum and more weakly in heart, muscle and intestine.

The protein localises to the apical cell membrane. The enzyme catalyses Na(+)(in) = Na(+)(out). Originally identified and characterized by its inhibition by the diuretic drug amiloride. Functionally, this is one of the three pore-forming subunits of the heterotrimeric epithelial sodium channel (ENaC), a critical regulator of sodium balance and fluid homeostasis. ENaC operates in epithelial tissues, where it mediates the electrodiffusion of sodium ions from extracellular fluid through the apical membrane of cells, with water following osmotically. The polypeptide is Epithelial sodium channel subunit gamma (Neoceratodus forsteri (Australian lungfish)).